The sequence spans 501 residues: Betaine aldehyde dehydrogenase, chloroplastic (501 aa).

The N-terminal 7 residues, 1 to 7, are a transit peptide targeting the chloroplast; that stretch reads MAIRVPS. 238-243 contributes to the NAD(+) binding site; it reads GSTATG. Glu-260 functions as the Proton acceptor in the catalytic mechanism. The active-site Nucleophile is Cys-294.

Belongs to the aldehyde dehydrogenase family. Homodimer.

The protein resides in the plastid. It localises to the chloroplast. The catalysed reaction is betaine aldehyde + NAD(+) + H2O = glycine betaine + NADH + 2 H(+). It participates in amine and polyamine biosynthesis; betaine biosynthesis via choline pathway; betaine from betaine aldehyde: step 1/1. The polypeptide is Betaine aldehyde dehydrogenase, chloroplastic (BADH4) (Amaranthus hypochondriacus (Prince-of-Wales feather)).